Consider the following 162-residue polypeptide: Dihydrofolate reductase (162 aa).

A DHFR domain is found at 3 to 161; it reads KITIIAACAE…VAYTFVHYLG (159 aa). Residue 7–9 coordinates substrate; it reads IAA. Residues 8 to 9 and 16 to 21 contribute to the NADP(+) site; these read AA and IGAGNA. Asp-29 contacts substrate. Residue 45–48 participates in NADP(+) binding; the sequence is GRKT. Arg-60 provides a ligand contact to substrate. Residues 65–68 and 98–103 contribute to the NADP(+) site; these read ISRQ and MGGAQI. Thr-117 provides a ligand contact to substrate.

This sequence belongs to the dihydrofolate reductase family.

The enzyme catalyses (6S)-5,6,7,8-tetrahydrofolate + NADP(+) = 7,8-dihydrofolate + NADPH + H(+). It functions in the pathway cofactor biosynthesis; tetrahydrofolate biosynthesis; 5,6,7,8-tetrahydrofolate from 7,8-dihydrofolate: step 1/1. Key enzyme in folate metabolism. Catalyzes an essential reaction for de novo glycine and purine synthesis, and for DNA precursor synthesis. The sequence is that of Dihydrofolate reductase (folA) from Neisseria gonorrhoeae.